The sequence spans 172 residues: Disulfide bond formation protein B (172 aa).

The Cytoplasmic portion of the chain corresponds to 1–13 (MIIRLAGMSVRQG). The helical transmembrane segment at 14–30 (CLLGLLMCALMMGVALV) threads the bilayer. Residues 31 to 48 (LQYVYGLTPCPLCIGQRI) are Periplasmic-facing. A disulfide bond links Cys-40 and Cys-43. Residues 49–65 (AVLLAAFVFAIGALHNP) form a helical membrane-spanning segment. The Cytoplasmic segment spans residues 66 to 72 (AGNLGRG). Residues 73-90 (LYAGLAALASVLGLAVAA) form a helical membrane-spanning segment. Topologically, residues 91-147 (RHVWLQSLPPENVPSCGPGLDYMMEVLPLWDVLSRVLAGSGECAEIHGSLLGMSIPQ) are periplasmic. Cys-106 and Cys-133 form a disulfide bridge. The chain crosses the membrane as a helical span at residues 148–166 (WTLLGFAVLLLIPLGMLAG). At 167 to 172 (IVIRRR) the chain is on the cytoplasmic side.

It belongs to the DsbB family.

Its subcellular location is the cell inner membrane. Its function is as follows. Required for disulfide bond formation in some periplasmic proteins. Acts by oxidizing the DsbA protein. The sequence is that of Disulfide bond formation protein B from Chromohalobacter salexigens (strain ATCC BAA-138 / DSM 3043 / CIP 106854 / NCIMB 13768 / 1H11).